The following is a 354-amino-acid chain: Probable L-ascorbate-6-phosphate lactonase UlaG (354 aa).

Belongs to the UlaG family. Requires a divalent metal cation as cofactor.

The protein localises to the cytoplasm. The enzyme catalyses L-ascorbate 6-phosphate + H2O = 3-dehydro-L-gulonate 6-phosphate. It functions in the pathway cofactor degradation; L-ascorbate degradation; D-xylulose 5-phosphate from L-ascorbate: step 1/4. Functionally, probably catalyzes the hydrolysis of L-ascorbate-6-P into 3-keto-L-gulonate-6-P. Is essential for L-ascorbate utilization under anaerobic conditions. In Shigella boydii serotype 4 (strain Sb227), this protein is Probable L-ascorbate-6-phosphate lactonase UlaG.